Here is a 122-residue protein sequence, read N- to C-terminus: Large ribosomal subunit protein uL14 (122 aa).

The protein belongs to the universal ribosomal protein uL14 family. Part of the 50S ribosomal subunit. Forms a cluster with proteins L3 and L19. In the 70S ribosome, L14 and L19 interact and together make contacts with the 16S rRNA in bridges B5 and B8.

Functionally, binds to 23S rRNA. Forms part of two intersubunit bridges in the 70S ribosome. The protein is Large ribosomal subunit protein uL14 of Oleidesulfovibrio alaskensis (strain ATCC BAA-1058 / DSM 17464 / G20) (Desulfovibrio alaskensis).